A 219-amino-acid chain; its full sequence is Ras-related protein Rab-3D (219 aa).

Residue Ala2 is modified to N-acetylalanine. Residue 29–37 (GNSSVGKTS) coordinates GDP. GTP-binding residues include Ser31, Ser32, Val33, Gly34, Lys35, Thr36, Ser37, Pro49, and Ser53. Thr36 contributes to the Mg(2+) binding site. The short motif at 49–58 (PAFVSTVGID) is the Switch 1 element. Positions 54 and 77 each coordinate Mg(2+). Gly80 contacts GTP. The Switch 2 signature appears at 80–96 (GQERYRTITTAYYRGAM). Thr86 carries the phosphothreonine; by LRRK2 modification. Positions 135, 136, 138, 166, and 167 each coordinate GTP. GDP-binding positions include 135 to 138 (NKCD) and 165 to 167 (SAK). The residue at position 190 (Ser190) is a Phosphoserine. Residues 190–219 (SLEPSSSPGSNGKGPALGDTPPPQPSSCSC) form a disordered region. The span at 193-203 (PSSSPGSNGKG) shows a compositional bias: low complexity. Positions 209–219 (TPPPQPSSCSC) are enriched in pro residues. S-geranylgeranyl cysteine attachment occurs at residues Cys217 and Cys219. Cys219 is subject to Cysteine methyl ester.

It belongs to the small GTPase superfamily. Rab family. In terms of assembly, interacts with RIMS1, RIMS2, RPH3A, RPH3AL and RAB3IP. The GTP-bound form interacts with REP15. Interacts with CHM and CHML; phosphorylation at Thr-86 disrupts these interactions. Interacts with MADD (via uDENN domain); the GTP-bound form is preferred for interaction. Mg(2+) serves as cofactor. Post-translationally, phosphorylation of Thr-86 in the switch II region by LRRK2 prevents the association of RAB regulatory proteins, including CHM and CHML. In terms of tissue distribution, predominantly expressed in the adipocyte tissue, but is also expressed in several other organs including skin, spleen, heart and lung.

It localises to the cell membrane. The catalysed reaction is GTP + H2O = GDP + phosphate + H(+). Regulated by guanine nucleotide exchange factors (GEFs) which promote the exchange of bound GDP for free GTP. Regulated by GTPase activating proteins (GAPs) which increase the GTP hydrolysis activity. Inhibited by GDP dissociation inhibitors (GDIs) which prevent Rab-GDP dissociation. Its function is as follows. The small GTPases Rab are key regulators of intracellular membrane trafficking, from the formation of transport vesicles to their fusion with membranes. Rabs cycle between an inactive GDP-bound form and an active GTP-bound form that is able to recruit to membranes different sets of downstream effectors directly responsible for vesicle formation, movement, tethering and fusion. RAB3D may be involved in the insulin-induced exocytosis of GLUT4-containing vesicles in adipocytes. The sequence is that of Ras-related protein Rab-3D from Mus musculus (Mouse).